Here is a 412-residue protein sequence, read N- to C-terminus: Imidazolonepropionase (412 aa).

The Fe(3+) site is built by His-76 and His-78. The Zn(2+) site is built by His-76 and His-78. 4-imidazolone-5-propanoate is bound by residues Arg-85, Tyr-148, and His-181. Tyr-148 lines the N-formimidoyl-L-glutamate pocket. His-242 contributes to the Fe(3+) binding site. His-242 is a Zn(2+) binding site. Residue Glu-245 participates in 4-imidazolone-5-propanoate binding. Residue Asp-317 participates in Fe(3+) binding. Asp-317 lines the Zn(2+) pocket. Asn-319 and Gly-321 together coordinate N-formimidoyl-L-glutamate. Ser-322 serves as a coordination point for 4-imidazolone-5-propanoate.

Belongs to the metallo-dependent hydrolases superfamily. HutI family. Zn(2+) is required as a cofactor. It depends on Fe(3+) as a cofactor.

The protein localises to the cytoplasm. It catalyses the reaction 4-imidazolone-5-propanoate + H2O = N-formimidoyl-L-glutamate. It functions in the pathway amino-acid degradation; L-histidine degradation into L-glutamate; N-formimidoyl-L-glutamate from L-histidine: step 3/3. Catalyzes the hydrolytic cleavage of the carbon-nitrogen bond in imidazolone-5-propanoate to yield N-formimidoyl-L-glutamate. It is the third step in the universal histidine degradation pathway. This Staphylococcus aureus (strain MSSA476) protein is Imidazolonepropionase.